The sequence spans 585 residues: Folylpolyglutamate synthase, mitochondrial (585 aa).

The transit peptide at 1–39 (MSRARCHALFLAAVSPRGATTRVAVRRGLSAWPVLQEPD) directs the protein to the mitochondrion. 103–106 (GKGS) lines the ATP pocket. 3 residues coordinate Mg(2+): serine 127, glutamate 198, and histidine 226. Residues arginine 361 and aspartate 375 each coordinate ATP. The tract at residues 477-497 (EEQVSPDPWSTPGQEQDGPAS) is disordered. At serine 537 the chain carries Phosphoserine.

Belongs to the folylpolyglutamate synthase family. In terms of assembly, monomer. A monovalent cation is required as a cofactor.

It localises to the mitochondrion inner membrane. The protein localises to the mitochondrion matrix. Its subcellular location is the cytoplasm. The catalysed reaction is (6S)-5,6,7,8-tetrahydrofolyl-(gamma-L-Glu)(n) + L-glutamate + ATP = (6S)-5,6,7,8-tetrahydrofolyl-(gamma-L-Glu)(n+1) + ADP + phosphate + H(+). The protein operates within cofactor biosynthesis; tetrahydrofolylpolyglutamate biosynthesis. Functionally, catalyzes conversion of folates to polyglutamate derivatives allowing concentration of folate compounds in the cell and the intracellular retention of these cofactors, which are important substrates for most of the folate-dependent enzymes that are involved in one-carbon transfer reactions involved in purine, pyrimidine and amino acid synthesis. The protein is Folylpolyglutamate synthase, mitochondrial (FPGS) of Bos taurus (Bovine).